A 454-amino-acid chain; its full sequence is Tubulin beta-2 chain (454 aa).

The GTP site is built by Gln-11, Glu-69, Ser-138, Gly-142, Thr-143, Gly-144, Asn-204, and Asn-226. Glu-69 contributes to the Mg(2+) binding site. The disordered stretch occupies residues 426–454; sequence QEASVDDEAMEDDAEAEGGAGQNEAVEEF. The segment covering 429-441 has biased composition (acidic residues); that stretch reads SVDDEAMEDDAEA.

The protein belongs to the tubulin family. In terms of assembly, dimer of alpha and beta chains. A typical microtubule is a hollow water-filled tube with an outer diameter of 25 nm and an inner diameter of 15 nM. Alpha-beta heterodimers associate head-to-tail to form protofilaments running lengthwise along the microtubule wall with the beta-tubulin subunit facing the microtubule plus end conferring a structural polarity. Microtubules usually have 13 protofilaments but different protofilament numbers can be found in some organisms and specialized cells. Requires Mg(2+) as cofactor.

The protein resides in the cytoplasm. Its subcellular location is the cytoskeleton. It localises to the spindle. The protein localises to the nucleus. Its function is as follows. Tubulin is the major constituent of microtubules, a cylinder consisting of laterally associated linear protofilaments composed of alpha- and beta-tubulin heterodimers. Microtubules grow by the addition of GTP-tubulin dimers to the microtubule end, where a stabilizing cap forms. Below the cap, tubulin dimers are in GDP-bound state, owing to GTPase activity of alpha-tubulin. In terms of biological role, this is the major beta tubulin of mitotic spindle. The sequence is that of Tubulin beta-2 chain (BETC) from Physarum polycephalum (Slime mold).